Consider the following 872-residue polypeptide: Metabotropic glutamate receptor 2 (872 aa).

The first 18 residues, 1–18, serve as a signal peptide directing secretion; it reads MESLLGFLALLLLWGAVA. The Extracellular segment spans residues 19–567; the sequence is EGPAKKVLTL…QEYIRWGDAW (549 aa). A disulfide bridge connects residues Cys50 and Cys92. The L-glutamate site is built by Arg57, Arg61, Ser145, Ala166, and Thr168. Residues Asn203 and Asn286 are each glycosylated (N-linked (GlcNAc...) asparagine). Intrachain disulfides connect Cys234–Cys518, Cys355–Cys362, Cys400–Cys407, Cys500–Cys519, Cys504–Cys522, Cys525–Cys537, and Cys540–Cys553. Asp295 contributes to the L-glutamate binding site. Asn338 carries N-linked (GlcNAc...) asparagine glycosylation. Lys377 contributes to the L-glutamate binding site. Asn402 carries N-linked (GlcNAc...) asparagine glycosylation. Residue Asn547 is glycosylated (N-linked (GlcNAc...) asparagine). A helical membrane pass occupies residues 568 to 590; the sequence is AVGPVTIACLGALATLFVLGVFV. Residues 591–604 are Cytoplasmic-facing; that stretch reads RHNATPVVKASGRE. Residues 605–625 form a helical membrane-spanning segment; sequence LCYILLGGVFLCYCMTFVFIA. Residues 626–636 are Extracellular-facing; it reads KPSTAVCTLRR. Cys632 and Cys721 are disulfide-bonded. Residues 637-655 traverse the membrane as a helical segment; it reads LGLGTAFSVCYSALLTKTN. Residues 656–679 lie on the Cytoplasmic side of the membrane; sequence RIARIFGGAREGAQRPRFISPASQ. The important for interaction with HTR2A stretch occupies residues 677–685; the sequence is ASQVAICLA. The chain crosses the membrane as a helical span at residues 680-700; that stretch reads VAICLALISGQLLIVAAWLVV. Residues 701–725 lie on the Extracellular side of the membrane; sequence EAPGTGKETAPERREVVTLRCNHRD. A helical transmembrane segment spans residues 726–747; that stretch reads ASMLGSLAYNVLLIALCTLYAF. The Cytoplasmic portion of the chain corresponds to 748-760; that stretch reads KTRKCPENFNEAK. Residues 761 to 783 traverse the membrane as a helical segment; sequence FIGFTMYTTCIIWLAFLPIFYVT. At 784-793 the chain is on the extracellular side; that stretch reads SSDYRVQTTT. The helical transmembrane segment at 794–819 threads the bilayer; sequence MCVSVSLSGSVVLGCLFAPKLHIILF. Topologically, residues 820-872 are cytoplasmic; sequence QPQKNVVSHRAPTSRFGSAAPRASANLGQGSGSQFVPTVCNGREVVDSTTSSL.

This sequence belongs to the G-protein coupled receptor 3 family. As to quaternary structure, forms heterodimers with GRM3 or GRM4. Interacts with GNAI1. Interacts with TAMALIN. Interacts with HTR2A. As to expression, is widely distributed in the CNS and prominent expression is seen in Golgi cells of the cerebellum and some particular neuronal cells in other brain regions.

It localises to the cell membrane. The protein resides in the synapse. The protein localises to the cell projection. It is found in the dendrite. Functionally, dimeric G protein-coupled receptor which is activated by the excitatory neurotransmitter L-glutamate. Plays critical roles in modulating synaptic transmission and neuronal excitability. Upon activation by glutamate, inhibits presynaptic calcium channels, reducing further glutamate release and dampening excitatory signaling. Mechanistically, ligand binding causes a conformation change that triggers signaling via guanine nucleotide-binding proteins (G proteins) and modulates the activity of down-stream effectors, such as adenylate cyclase. May mediate suppression of neurotransmission or may be involved in synaptogenesis or synaptic stabilization. This Rattus norvegicus (Rat) protein is Metabotropic glutamate receptor 2 (Grm2).